The following is a 113-amino-acid chain: Protein crumbs homolog 3 (113 aa).

The first 24 residues, 1–24 (MATPGLGVLLAFGLPMLPSGWSLT), serve as a signal peptide directing secretion. A disordered region spans residues 23 to 44 (LTAPDPFTNSTTQPPGDESNGG). The Extracellular portion of the chain corresponds to 25-49 (APDPFTNSTTQPPGDESNGGLSSGA). The N-linked (GlcNAc...) asparagine glycan is linked to Asn31. A helical transmembrane segment spans residues 50–70 (IVAITVVFSILGVLLIAVGLF). Topologically, residues 71–113 (LLMRKLREKRQTEGTYRPSSEEQVGARAPPPPNLKLPPEERLI) are cytoplasmic. The interaction with EPB41L5 stretch occupies residues 77–113 (REKRQTEGTYRPSSEEQVGARAPPPPNLKLPPEERLI). Residues 80–113 (RQTEGTYRPSSEEQVGARAPPPPNLKLPPEERLI) form a disordered region. Positions 83–92 (EGTYRPSSEE) are enriched in polar residues. A PDZ-binding motif is present at residues 110 to 113 (ERLI).

Component of a complex composed of CRB3, PALS1 and PATJ. Interacts (via C-terminus) with PALS1 (via PDZ domain). Interacts with PARD6A. Interacts (via intracellular domain) with EPB41L5. Interacts with WDR83. As to expression, expressed in the apical renal tubules (at protein level). Expressed in the retinal pigment epithelium.

Its subcellular location is the apical cell membrane. It localises to the cell junction. The protein localises to the tight junction. Involved in the establishment of cell polarity in mammalian epithelial cells. Regulates the morphogenesis of tight junctions. Involved in promoting phosphorylation and cytoplasmic retention of transcriptional coactivators YAP1 and WWTR1/TAZ which leads to suppression of TGFB1-dependent transcription of target genes such as CCN2/CTGF, SERPINE1/PAI1, SNAI1/SNAIL1 and SMAD7. In Mus musculus (Mouse), this protein is Protein crumbs homolog 3 (Crb3).